The chain runs to 338 residues: MRTDDFDYKLPEELIASYPLENRDASRLLKLNKQTGEILDHKFTDFIDFINPEDLLIFNNSKVMLARLYGEKITGAKLEYLIERVKTPKIFETHIKANRSPAIGSEIYVQDTLAKILEKDGGMYLLELQGNKDIYQLMEEFGHIPLPPYMKRDDEEFDAERYQTVYAKDLGSVAAPTAGLHFSEELMQQIKAKGTDIAYITLHVGSGTFKPVQVDDVNNHKMHSEVISVSEDVCEKIRQTKANGGRVIAIGTTSVRSLETAGQSGEIQPYQGETDIFLYPGKKFNIVDAMITNFHLPKSTLIMLVSAFADKEKIMKAYEHAIAEKYRFFSYGDAMFIF.

This sequence belongs to the QueA family. As to quaternary structure, monomer.

It localises to the cytoplasm. The enzyme catalyses 7-aminomethyl-7-carbaguanosine(34) in tRNA + S-adenosyl-L-methionine = epoxyqueuosine(34) in tRNA + adenine + L-methionine + 2 H(+). The protein operates within tRNA modification; tRNA-queuosine biosynthesis. In terms of biological role, transfers and isomerizes the ribose moiety from AdoMet to the 7-aminomethyl group of 7-deazaguanine (preQ1-tRNA) to give epoxyqueuosine (oQ-tRNA). This Francisella philomiragia subsp. philomiragia (strain ATCC 25017 / CCUG 19701 / FSC 153 / O#319-036) protein is S-adenosylmethionine:tRNA ribosyltransferase-isomerase.